The sequence spans 326 residues: Probable cell division protein WhiA (326 aa).

A DNA-binding region (H-T-H motif) is located at residues serine 275–serine 308.

This sequence belongs to the WhiA family.

Functionally, involved in cell division and chromosome segregation. The sequence is that of Probable cell division protein WhiA from Leifsonia xyli subsp. xyli (strain CTCB07).